The primary structure comprises 254 residues: 4-hydroxy-tetrahydrodipicolinate reductase (254 aa).

Residues 8–13 (GGSGRV), 87–89 (GTT), and 111–114 (ATNM) each bind NAD(+). The active-site Proton donor/acceptor is the His143. His144 is a (S)-2,3,4,5-tetrahydrodipicolinate binding site. The active-site Proton donor is the Lys147. 153-154 (GT) serves as a coordination point for (S)-2,3,4,5-tetrahydrodipicolinate.

Belongs to the DapB family.

Its subcellular location is the cytoplasm. It catalyses the reaction (S)-2,3,4,5-tetrahydrodipicolinate + NAD(+) + H2O = (2S,4S)-4-hydroxy-2,3,4,5-tetrahydrodipicolinate + NADH + H(+). The catalysed reaction is (S)-2,3,4,5-tetrahydrodipicolinate + NADP(+) + H2O = (2S,4S)-4-hydroxy-2,3,4,5-tetrahydrodipicolinate + NADPH + H(+). The protein operates within amino-acid biosynthesis; L-lysine biosynthesis via DAP pathway; (S)-tetrahydrodipicolinate from L-aspartate: step 4/4. Its function is as follows. Catalyzes the conversion of 4-hydroxy-tetrahydrodipicolinate (HTPA) to tetrahydrodipicolinate. The chain is 4-hydroxy-tetrahydrodipicolinate reductase from Nitratiruptor sp. (strain SB155-2).